The sequence spans 466 residues: Vimentin (466 aa).

A compositionally biased stretch (low complexity) spans 1 to 13; the sequence is MSTRSVSSSSYRR. The segment at 1 to 32 is disordered; the sequence is MSTRSVSSSSYRRMFGGPGTGSRPSSTRSYVT. Ser-2 bears the N-acetylserine mark. The tract at residues 2-95 is head; that stretch reads STRSVSSSSY…FSLADAINTE (94 aa). Ser-5, Ser-7, Ser-8, Ser-9, and Ser-10 each carry phosphoserine. Ser-7 is a glycosylation site (O-linked (GlcNAc) serine; alternate). Position 20 is a phosphothreonine (Thr-20). A compositionally biased stretch (low complexity) spans 21-32; it reads GSRPSSTRSYVT. Ser-25 and Ser-26 each carry phosphoserine. Thr-33 is a glycosylation site (O-linked (GlcNAc) threonine). Phosphoserine occurs at positions 34, 39, 42, 47, 49, and 51. O-linked (GlcNAc) serine; alternate glycosylation is present at Ser-34. Position 53 is a phosphotyrosine (Tyr-53). Residues Ser-55 and Ser-56 each carry the phosphoserine modification. The residue at position 61 (Tyr-61) is a Phosphotyrosine. A phosphoserine mark is found at Ser-66, Ser-72, Ser-73, Ser-83, and Ser-87. A coil 1A region spans residues 96 to 131; it reads FKNTRTNEKVELQELNDRFANYIDKVRFLEQQNKIL. The stretch at 96 to 131 forms a coiled coil; the sequence is FKNTRTNEKVELQELNDRFANYIDKVRFLEQQNKIL. The IF rod domain occupies 103-411; the sequence is EKVELQELND…KLLEGEESRI (309 aa). Lys-104 is covalently cross-linked (Glycyl lysine isopeptide (Lys-Gly) (interchain with G-Cter in SUMO2)). Tyr-117 carries the post-translational modification Phosphotyrosine. N6-acetyllysine; alternate is present on residues Lys-120, Lys-129, and Lys-139. Lys-120 and Lys-129 each carry N6-succinyllysine; alternate. Glycyl lysine isopeptide (Lys-Gly) (interchain with G-Cter in SUMO2); alternate cross-links involve residues Lys-120, Lys-129, and Lys-139. The segment at 132 to 153 is linker 1; the sequence is LAELEQLKGQGKSRLGDLYEEE. Ser-144 carries the post-translational modification Phosphoserine. Positions 154 to 245 form a coiled coil; sequence MRELRRQVDQ…KLHDEEIQEL (92 aa). The tract at residues 154–245 is coil 1B; sequence MRELRRQVDQ…KLHDEEIQEL (92 aa). Lys-168 is modified (N6-acetyllysine). Lys-188 is modified (N6-acetyllysine; alternate). At Lys-188 the chain carries N6-succinyllysine; alternate. Position 214 is a phosphoserine (Ser-214). Lys-223 is subject to N6-acetyllysine; alternate. Lys-223 is covalently cross-linked (Glycyl lysine isopeptide (Lys-Gly) (interchain with G-Cter in SUMO2); alternate). Ser-226 carries the phosphoserine modification. Lys-235 carries the N6-acetyllysine modification. The interval 246 to 268 is linker 12; that stretch reads QAQIQDQHVQIDMDVSKPDLTAA. Lys-262 is covalently cross-linked (Glycyl lysine isopeptide (Lys-Gly) (interchain with G-Cter in SUMO2)). The interval 269-407 is coil 2; that stretch reads LRDVRQQYES…ATYRKLLEGE (139 aa). Lys-294 carries the N6-acetyllysine; alternate modification. Position 294 is an N6-succinyllysine; alternate (Lys-294). Residue Lys-294 forms a Glycyl lysine isopeptide (Lys-Gly) (interchain with G-Cter in SUMO2); alternate linkage. Ser-299 carries the post-translational modification Phosphoserine. The stretch at 303 to 407 forms a coiled coil; that stretch reads NRNNDALRQA…ATYRKLLEGE (105 aa). Lys-313 is covalently cross-linked (Glycyl lysine isopeptide (Lys-Gly) (interchain with G-Cter in SUMO2)). Ser-325 carries the phosphoserine modification. The short motif at 326–329 is the [IL]-x-C-x-x-[DE] motif element; the sequence is LTCE. At Lys-373 the chain carries N6-acetyllysine; alternate. Lys-373 participates in a covalent cross-link: Glycyl lysine isopeptide (Lys-Gly) (interchain with G-Cter in SUMO2); alternate. The interval 408–466 is tail; sequence ESRIALPLPNFSSLNLRETNLDSLPLVDTHSKRTLLIKTVETRDGQVINETSQHHDDLE. Residues Ser-409, Ser-419, and Ser-420 each carry the phosphoserine modification. Thr-426 is subject to Phosphothreonine. Ser-430 carries the phosphoserine modification. At Thr-436 the chain carries Phosphothreonine. At Ser-438 the chain carries Phosphoserine. Lys-439 participates in a covalent cross-link: Glycyl lysine isopeptide (Lys-Gly) (interchain with G-Cter in SUMO2). At Lys-445 the chain carries N6-acetyllysine; alternate. Lys-445 carries the N6-succinyllysine; alternate modification. Lys-445 participates in a covalent cross-link: Glycyl lysine isopeptide (Lys-Gly) (interchain with G-Cter in SUMO2); alternate. Lys-445 is covalently cross-linked (Glycyl lysine isopeptide (Lys-Gly) (interchain with G-Cter in SUMO1); alternate). Residues Thr-446 and Thr-458 each carry the phosphothreonine modification. Ser-459 is modified (phosphoserine).

The protein belongs to the intermediate filament family. Homomer assembled from elementary dimers. Identified in complexes that contain VIM, EZR, AHNAK, BFSP1, BFSP2, ANK2, PLEC, PRX and spectrin. Interacts with BCAS3. Interacts with LGSN. Interacts with SYNM. Interacts (via rod region) with PLEC (via CH 1 domain). Interacts with STK33. Interacts with LARP6. Interacts with RAB8B. Interacts with TOR1A; the interaction associates TOR1A with the cytoskeleton. Interacts with TOR1AIP1. Interacts with TOR1AIP1. Interacts with DIAPH1. Interacts with EPPK1; interaction is dependent of higher-order structure of intermediate filament. Interacts with the non-receptor tyrosine kinase SRMS; the interaction leads to phosphorylation of VIM. Interacts with NOD2. Interacts (via head region) with CORO1C. Interacts with HDGF. Interacts with PRKCE (via phorbol-ester/DAG-type 2 domain). Interacts with BFSP2. Interacts with PPL. Interacts with PKP1 and PKP2. Interacts with SCRIB (via PDZ domains); the interaction protects SCRIB from proteasomal degradation and facilitates SCRIB localization to intermediate filaments, the interaction is reduced by cell contact inhibition. In terms of processing, filament disassembly during mitosis is promoted by phosphorylation at Ser-55 as well as by nestin. One of the most prominent phosphoproteins in various cells of mesenchymal origin. Phosphorylation is enhanced during cell division, at which time vimentin filaments are significantly reorganized. Phosphorylation by PKN1 inhibits the formation of filaments. Phosphorylated at Ser-56 by CDK5 during neutrophil secretion in the cytoplasm. Phosphorylated by STK33. Phosphorylated on tyrosine residues by SRMS. O-glycosylated during cytokinesis at sites identical or close to phosphorylation sites, this interferes with the phosphorylation status. Post-translationally, S-nitrosylation is induced by interferon-gamma and oxidatively-modified low-densitity lipoprotein (LDL(ox)) possibly implicating the iNOS-S100A8/9 transnitrosylase complex.

The protein localises to the cytoplasm. It is found in the cytoskeleton. It localises to the nucleus matrix. The protein resides in the cell membrane. Vimentins are class-III intermediate filaments found in various non-epithelial cells, especially mesenchymal cells. Vimentin is attached to the nucleus, endoplasmic reticulum, and mitochondria, either laterally or terminally. Plays a role in cell directional movement, orientation, cell sheet organization and Golgi complex polarization at the cell migration front. Protects SCRIB from proteasomal degradation and facilitates its localization to intermediate filaments in a cell contact-mediated manner. Functionally, involved with LARP6 in the stabilization of type I collagen mRNAs for CO1A1 and CO1A2. The polypeptide is Vimentin (VIM) (Canis lupus familiaris (Dog)).